The following is a 173-amino-acid chain: Calmodulin-like protein 11 (173 aa).

A compositionally biased stretch (low complexity) spans 1–26 (MEEIQQQQQQQQQQQQQQQQQQQQQQ). The segment at 1 to 27 (MEEIQQQQQQQQQQQQQQQQQQQQQQE) is disordered. EF-hand domains follow at residues 31 to 66 (EQIMEFKEAFCLFDKDGDGCITADELATVIRSLDQN), 67 to 102 (PTEQELQDMITEIDSDGNGTIEFSEFLNLMANQLQE), 104 to 139 (DADEELKEAFKVFDKDQNGYISASELRHVMINLGEK), and 140 to 173 (LTDEEVDQMIKEADLDGDGQVNYDEFVRMMMING). D44, D46, D48, C50, E55, D80, D82, N84, T86, E91, D117, D119, N121, Y123, E128, D153, D155, D157, Q159, and E164 together coordinate Ca(2+).

Belongs to the calmodulin family.

In terms of biological role, potential calcium sensor. The polypeptide is Calmodulin-like protein 11 (CML11) (Arabidopsis thaliana (Mouse-ear cress)).